Consider the following 596-residue polypeptide: Putative ankyrin repeat protein FPV024 (596 aa).

ANK repeat units lie at residues 5 to 34 (KLRK…TFSN), 37 to 66 (ALST…DINK), 68 to 96 (KSPP…DIEK), 99 to 128 (LGNS…DPNT), 130 to 158 (FINY…SLNI), 162 to 191 (HFKT…SLTI), 195 to 225 (YNNH…PVNE), 229 to 258 (LERT…DPNI), 262 to 291 (CLGT…NVNI), 295 to 324 (TIDT…NTRL), 326 to 355 (SRNP…EVNI), 359 to 389 (EGYT…NPNM), and 394 to 423 (NENT…DVHS).

This Fowlpox virus (strain NVSL) (FPV) protein is Putative ankyrin repeat protein FPV024.